Consider the following 233-residue polypeptide: Orotidine 5'-phosphate decarboxylase (233 aa).

Substrate-binding positions include D13, K35, 62–71, T122, R182, Q191, G211, and R212; that span reads DLKFHDIPNT. K64 serves as the catalytic Proton donor.

This sequence belongs to the OMP decarboxylase family. Type 1 subfamily. In terms of assembly, homodimer.

It carries out the reaction orotidine 5'-phosphate + H(+) = UMP + CO2. It participates in pyrimidine metabolism; UMP biosynthesis via de novo pathway; UMP from orotate: step 2/2. In terms of biological role, catalyzes the decarboxylation of orotidine 5'-monophosphate (OMP) to uridine 5'-monophosphate (UMP). In Pseudomonas putida (strain ATCC 47054 / DSM 6125 / CFBP 8728 / NCIMB 11950 / KT2440), this protein is Orotidine 5'-phosphate decarboxylase.